The sequence spans 168 residues: Ribosome maturation factor RimM (168 aa).

In terms of domain architecture, PRC barrel spans 96-168; it reads EDEYFITDLI…VMIVRLLEGL (73 aa).

The protein belongs to the RimM family. As to quaternary structure, binds ribosomal protein uS19.

It is found in the cytoplasm. In terms of biological role, an accessory protein needed during the final step in the assembly of 30S ribosomal subunit, possibly for assembly of the head region. Essential for efficient processing of 16S rRNA. May be needed both before and after RbfA during the maturation of 16S rRNA. It has affinity for free ribosomal 30S subunits but not for 70S ribosomes. In Caldanaerobacter subterraneus subsp. tengcongensis (strain DSM 15242 / JCM 11007 / NBRC 100824 / MB4) (Thermoanaerobacter tengcongensis), this protein is Ribosome maturation factor RimM.